The primary structure comprises 248 residues: 2,3-bisphosphoglycerate-dependent phosphoglycerate mutase (248 aa).

Substrate-binding positions include 8 to 15, 21 to 22, arginine 60, 87 to 90, lysine 98, 114 to 115, and 183 to 184; these read RHGESEWN, TG, ERHY, RR, and GN. Histidine 9 serves as the catalytic Tele-phosphohistidine intermediate. The Proton donor/acceptor role is filled by glutamate 87.

It belongs to the phosphoglycerate mutase family. BPG-dependent PGAM subfamily.

It catalyses the reaction (2R)-2-phosphoglycerate = (2R)-3-phosphoglycerate. The protein operates within carbohydrate degradation; glycolysis; pyruvate from D-glyceraldehyde 3-phosphate: step 3/5. Its function is as follows. Catalyzes the interconversion of 2-phosphoglycerate and 3-phosphoglycerate. The polypeptide is 2,3-bisphosphoglycerate-dependent phosphoglycerate mutase (Borreliella burgdorferi (strain ATCC 35210 / DSM 4680 / CIP 102532 / B31) (Borrelia burgdorferi)).